The chain runs to 275 residues: Malonyl-[acyl-carrier protein] O-methyltransferase (275 aa).

Belongs to the methyltransferase superfamily.

It catalyses the reaction malonyl-[ACP] + S-adenosyl-L-methionine = malonyl-[ACP] methyl ester + S-adenosyl-L-homocysteine. Its pathway is cofactor biosynthesis; biotin biosynthesis. Converts the free carboxyl group of a malonyl-thioester to its methyl ester by transfer of a methyl group from S-adenosyl-L-methionine (SAM). It allows to synthesize pimeloyl-ACP via the fatty acid synthetic pathway. This chain is Malonyl-[acyl-carrier protein] O-methyltransferase, found in Methylococcus capsulatus (strain ATCC 33009 / NCIMB 11132 / Bath).